A 120-amino-acid polypeptide reads, in one-letter code: Response regulator receiver protein CpdR (120 aa).

Positions 3 to 117 (RILLAEDDND…DLVNEIEKML (115 aa)) constitute a Response regulatory domain. At D52 the chain carries 4-aspartylphosphate.

Post-translationally, is phosphorylated by ChpT-P on Asp-52.

Its subcellular location is the cytoplasm. Functionally, component of a regulatory phosphorelay system that controls B.abortus cell growth, division, and intracellular survival inside mammalian host cells. This signaling pathway is composed of CckA, ChpT, CtrA and CpdR. CpdR is a response regulator substrate of ChpT. Unphosphorylated CpdR controls steady-state levels of CtrA in the B.abortus cell, likely via CtrA destabilization and activation of its proteolysis. The polypeptide is Response regulator receiver protein CpdR (Brucella abortus (strain 2308)).